The primary structure comprises 633 residues: MDLNKITSPSFLKNLNKKELEQVAQEIRTFLIEKCSVTGGHIGPNLGVVELTMMLHKMFDSPKDKFLWDVGHQAYVHKILTGRASQFDTLRQFKGLCGFPKRVESEHDEWETGHSSTSLSAAMGMAAARDIKKEHNYVIPIIGDGALTGGMALEALNHIGHAKTNMIVILNDNEMSIAPNVGALHSVLGRLRTAKEYSKAKEELESLINKIPVLGGKLASTAERLKDSLKYLVVSGVFFEELGFKYLGPIDGHDFEALEMTLSHAKKVKGPVLVHVITKKGKGYKPAEDDTIGNWHGTGPYKIENGAFVKSETKGPAWSSLIAETVRKIAHEDERIVTITPAMPVGSKLQGIQQDFPNRFFDVGIAEQHAATMAAGLATQNMKPFLAIYSTFLQRAYDQVLHDIARPNLNVFIGIDRAGLVGADGETHQGVFDIAFLRHIPNMTIMMPKDENEGQHMVKTAIEYDGGPIALRYPRGNGIGVPLDDELVALPIGSWEVLREGKDASILTFGTTIPMAMQAADMLAQQGIDIEVVNARFIKPMDKDMLHRILSNHKPILTIEEAVLKGGFGSGVLEFAHDHGYLNAIVDRMGIPDQYIEHGNVDQLLEEIHMTAEDAVARMQVLLQQKQQVGLNK.

Thiamine diphosphate is bound by residues H72 and 113-115 (GHS). D144 is a binding site for Mg(2+). Residues 145 to 146 (GA), N173, Y284, and E367 contribute to the thiamine diphosphate site. N173 provides a ligand contact to Mg(2+).

Belongs to the transketolase family. DXPS subfamily. Homodimer. Mg(2+) serves as cofactor. Thiamine diphosphate is required as a cofactor.

The enzyme catalyses D-glyceraldehyde 3-phosphate + pyruvate + H(+) = 1-deoxy-D-xylulose 5-phosphate + CO2. It functions in the pathway metabolic intermediate biosynthesis; 1-deoxy-D-xylulose 5-phosphate biosynthesis; 1-deoxy-D-xylulose 5-phosphate from D-glyceraldehyde 3-phosphate and pyruvate: step 1/1. Catalyzes the acyloin condensation reaction between C atoms 2 and 3 of pyruvate and glyceraldehyde 3-phosphate to yield 1-deoxy-D-xylulose-5-phosphate (DXP). In Lysinibacillus sphaericus (strain C3-41), this protein is 1-deoxy-D-xylulose-5-phosphate synthase.